A 399-amino-acid polypeptide reads, in one-letter code: tRNA-specific 2-thiouridylase MnmA (399 aa).

ATP contacts are provided by residues 18–25 (AMSGGVDS) and L44. Residue C112 is the Nucleophile of the active site. C112 and C213 form a disulfide bridge. G136 contributes to the ATP binding site. The segment at 163 to 165 (RDQ) is interaction with tRNA. The active-site Cysteine persulfide intermediate is the C213.

Belongs to the MnmA/TRMU family.

Its subcellular location is the cytoplasm. The catalysed reaction is S-sulfanyl-L-cysteinyl-[protein] + uridine(34) in tRNA + AH2 + ATP = 2-thiouridine(34) in tRNA + L-cysteinyl-[protein] + A + AMP + diphosphate + H(+). Functionally, catalyzes the 2-thiolation of uridine at the wobble position (U34) of tRNA, leading to the formation of s(2)U34. This chain is tRNA-specific 2-thiouridylase MnmA, found in Rhizobium rhizogenes (strain K84 / ATCC BAA-868) (Agrobacterium radiobacter).